Consider the following 291-residue polypeptide: 4-hydroxy-tetrahydrodipicolinate synthase (291 aa).

Residue Thr-47 participates in pyruvate binding. Tyr-134 acts as the Proton donor/acceptor in catalysis. The active-site Schiff-base intermediate with substrate is Lys-162. Ile-205 is a binding site for pyruvate.

The protein belongs to the DapA family. In terms of assembly, homotetramer; dimer of dimers.

It is found in the cytoplasm. The catalysed reaction is L-aspartate 4-semialdehyde + pyruvate = (2S,4S)-4-hydroxy-2,3,4,5-tetrahydrodipicolinate + H2O + H(+). It functions in the pathway amino-acid biosynthesis; L-lysine biosynthesis via DAP pathway; (S)-tetrahydrodipicolinate from L-aspartate: step 3/4. In terms of biological role, catalyzes the condensation of (S)-aspartate-beta-semialdehyde [(S)-ASA] and pyruvate to 4-hydroxy-tetrahydrodipicolinate (HTPA). This chain is 4-hydroxy-tetrahydrodipicolinate synthase, found in Methanosphaerula palustris (strain ATCC BAA-1556 / DSM 19958 / E1-9c).